Reading from the N-terminus, the 487-residue chain is Protein nucleotidyltransferase YdiU (487 aa).

ATP is bound by residues Gly-90, Gly-92, Arg-93, Lys-113, Asp-125, Gly-126, Arg-176, and Arg-183. The Proton acceptor role is filled by Asp-252. Positions 253 and 262 each coordinate Mg(2+). ATP is bound at residue Asp-262.

Belongs to the SELO family. The cofactor is Mg(2+). It depends on Mn(2+) as a cofactor.

The enzyme catalyses L-seryl-[protein] + ATP = 3-O-(5'-adenylyl)-L-seryl-[protein] + diphosphate. It carries out the reaction L-threonyl-[protein] + ATP = 3-O-(5'-adenylyl)-L-threonyl-[protein] + diphosphate. The catalysed reaction is L-tyrosyl-[protein] + ATP = O-(5'-adenylyl)-L-tyrosyl-[protein] + diphosphate. It catalyses the reaction L-histidyl-[protein] + UTP = N(tele)-(5'-uridylyl)-L-histidyl-[protein] + diphosphate. The enzyme catalyses L-seryl-[protein] + UTP = O-(5'-uridylyl)-L-seryl-[protein] + diphosphate. It carries out the reaction L-tyrosyl-[protein] + UTP = O-(5'-uridylyl)-L-tyrosyl-[protein] + diphosphate. Nucleotidyltransferase involved in the post-translational modification of proteins. It can catalyze the addition of adenosine monophosphate (AMP) or uridine monophosphate (UMP) to a protein, resulting in modifications known as AMPylation and UMPylation. This Ectopseudomonas mendocina (strain ymp) (Pseudomonas mendocina) protein is Protein nucleotidyltransferase YdiU.